The sequence spans 153 residues: UPF0260 protein YcgN (153 aa).

It belongs to the UPF0260 family.

In Shigella flexneri serotype 5b (strain 8401), this protein is UPF0260 protein YcgN.